Here is a 2696-residue protein sequence, read N- to C-terminus: Protein ILITYHIA (2696 aa).

Residues Met1–Ala18 show a composition bias toward polar residues. Residues Met1–Pro26 are disordered. HEAT repeat units follow at residues Asp162–Phe204, Ser253–Leu290, Lys303–Asn340, Glu364–Ser400, Lys401–Asn438, Ser487–Val525, Ala526–Thr562, Ser564–Ala601, and Val642–Cys677. Positions Lys901 to Lys941 are disordered. A compositionally biased stretch (basic and acidic residues) spans Gly923–Lys941. HEAT repeat units lie at residues His985–Gln1021, Asp1082–Ala1118, His1188–Ser1225, Lys1273–Lys1311, Ser1315–Arg1355, Pro1358–Glu1395, Ala1397–Ile1433, Leu1436–Lys1474, Pro1478–Ala1515, Tyr1516–Gln1553, Pro1564–Asn1600, Pro1601–Asp1638, Pro1640–Glu1677, Pro1683–Glu1720, Asn1722–Thr1759, Tyr1761–Ala1797, Lys1801–Thr1838, and Ser1840–Gly1876. Residue Ser1887 is modified to Phosphoserine. 19 HEAT repeats span residues Asp1908–Lys1945, Glu1949–Glu1986, Val1988–Arg2024, Ser2029–Leu2066, Gln2067–Ala2102, Val2104–Asn2137, Thr2138–Glu2175, Gly2177–Leu2213, Asp2217–Lys2254, Pro2258–Pro2292, Lys2293–Glu2330, Glu2335–Met2373, Pro2377–Arg2414, Asp2416–Lys2450, Ala2455–Ala2492, Gln2494–Ser2530, Ser2536–Ala2573, Lys2580–Ser2617, and Met2620–Gly2658.

It belongs to the GCN1 family.

Involved in immunity against bacterial infection and in non-host resistance. Required for embryo development. Required for systemic acquired resistance, but functions in an salicylic acid-independent manner. Required for bacterium-triggered stomatal closure response. This Arabidopsis thaliana (Mouse-ear cress) protein is Protein ILITYHIA.